The following is a 434-amino-acid chain: Fc receptor-like protein 6 (434 aa).

The first 19 residues, 1 to 19 (MLLWTAVLLFVPCVGKTVW), serve as a signal peptide directing secretion. 3 consecutive Ig-like C2-type domains span residues 20-95 (LYLQ…QTFT), 111-197 (PPVL…PQLE), and 207-293 (PVLT…KKLS). The Extracellular segment spans residues 20-307 (LYLQAWPNPV…QVLFTPASNW (288 aa)). Disulfide bonds link Cys39-Cys83, Cys132-Cys180, and Cys228-Cys276. Residue Asn65 is glycosylated (N-linked (GlcNAc...) asparagine). N-linked (GlcNAc...) asparagine glycosylation occurs at Asn273. A helical membrane pass occupies residues 308-328 (LVPWLPASLLGLMVIAAALLV). Topologically, residues 329–434 (YVRSWRKAGP…PLSDCEEVLC (106 aa)) are cytoplasmic. The ITIM motif signature appears at 369-374 (VVYSVV). Phosphotyrosine is present on Tyr371.

In terms of assembly, interacts (tyrosine phosphorylated) with PTPN11. Interacts (tyrosine phosphorylated) with PTPN6, INPP5D, INPPL1 and GRB2. Interacts with class II MHC HLA-DR when the alpha chain is associated with a beta-1, beta-4 or a beta-5 but not a beta-3 chain. Phosphorylated on Tyr residues. Tyrosine phosphorylation induces association with phosphatase PTPN11, PTPN6, INPP5D, INPPL1 and GRB2. As to expression, expressed by cytolytic cells including NK cells, effector and effector-memory CD8(+) T-cells, and a subset of NKT cells (at protein level). Also expressed in gamma delta T cells and in a rare subset of effector CD4(+) T-cells (at protein level). Expressed in spleen, skin, peripheral blood leukocytes, liver, lung, bone marrow, small intestine and placenta. Expression among T-cells is greatly expanded in HIV-1 infected individuals, and includes not only effector and effector-memory CD8(+) T-cells but also populations of CD4(+) T-cells. Expression among CD8(+) T-cells and NK cells is expanded in individuals with chronic lymphocytic leukemia (CLL) but is reduced in PBMCs from patients with acute (AML), chronic myeloid leukemia (CML) and non-Hodgkin's lymphoma. Expression is higher in PBMCs and/or CD3(+) cells of patients with autoimmune diseases, such as rheumatoid arthritis (RA), systemic lupus erythematosus (SLE) and idiopathic thrombocytopenia purpura (ITP). In contrast, expression in CD3(+) cells from patients with lupus anticoagulans (LA) is higher.

The protein localises to the cell membrane. Functionally, acts as a MHC class II receptor. When stimulated on its own, does not play a role in cytokine production or the release of cytotoxic granules by NK cells and cytotoxic CD8(+) T cells. Does not act as an Fc receptor. This Homo sapiens (Human) protein is Fc receptor-like protein 6 (FCRL6).